The chain runs to 245 residues: Exosome complex component RRP41 (245 aa).

A2 carries the N-acetylalanine modification.

This sequence belongs to the RNase PH family. As to quaternary structure, component of the RNA exosome core complex (Exo-9), composed of EXOSC1, EXOSC2, EXOSC3, EXOSC4, EXOSC5, EXOSC6, EXOSC7, EXOSC8 and EXOSC9; within the complex interacts with EXOSC2, EXOSC7 and EXOSC9. The catalytically inactive RNA exosome core complex (Exo-9) associates with the catalytic subunit EXOSC10/RRP6. Exo-9 may associate with DIS3 to form the nucleolar exosome complex, or DIS3L to form the cytoplasmic exosome complex. Exo-9 is formed by a hexameric base ring consisting of the heterodimers EXOSC4-EXOSC9, EXOSC5-EXOSC8 and EXOSC6-EXOSC7, and a cap ring consisting of EXOSC1, EXOSC2 and EXOSC3. The RNA exosome complex associates with cofactors C1D/RRP47, MPHOSPH6/MPP6 and MTREX/MTR4. Interacts with DDX60. Interacts with DIS3; the interaction is direct.

The protein localises to the cytoplasm. Its subcellular location is the nucleus. It localises to the nucleolus. It is found in the nucleoplasm. Non-catalytic component of the RNA exosome complex which has 3'-&gt;5' exoribonuclease activity and participates in a multitude of cellular RNA processing and degradation events. In the nucleus, the RNA exosome complex is involved in proper maturation of stable RNA species such as rRNA, snRNA and snoRNA, in the elimination of RNA processing by-products and non-coding 'pervasive' transcripts, such as antisense RNA species and promoter-upstream transcripts (PROMPTs), and of mRNAs with processing defects, thereby limiting or excluding their export to the cytoplasm. The RNA exosome may be involved in Ig class switch recombination (CSR) and/or Ig variable region somatic hypermutation (SHM) by targeting AICDA deamination activity to transcribed dsDNA substrates. In the cytoplasm, the RNA exosome complex is involved in general mRNA turnover and specifically degrades inherently unstable mRNAs containing AU-rich elements (AREs) within their 3' untranslated regions, and in RNA surveillance pathways, preventing translation of aberrant mRNAs. It seems to be involved in degradation of histone mRNA. The catalytic inactive RNA exosome core complex of 9 subunits (Exo-9) is proposed to play a pivotal role in the binding and presentation of RNA for ribonucleolysis, and to serve as a scaffold for the association with catalytic subunits and accessory proteins or complexes. EXOSC4 binds to ARE-containing RNAs. This chain is Exosome complex component RRP41 (EXOSC4), found in Bos taurus (Bovine).